Reading from the N-terminus, the 119-residue chain is Ribonuclease P protein component (119 aa).

The protein belongs to the RnpA family. Consists of a catalytic RNA component (M1 or rnpB) and a protein subunit.

The enzyme catalyses Endonucleolytic cleavage of RNA, removing 5'-extranucleotides from tRNA precursor.. RNaseP catalyzes the removal of the 5'-leader sequence from pre-tRNA to produce the mature 5'-terminus. It can also cleave other RNA substrates such as 4.5S RNA. The protein component plays an auxiliary but essential role in vivo by binding to the 5'-leader sequence and broadening the substrate specificity of the ribozyme. The chain is Ribonuclease P protein component from Edwardsiella ictaluri (strain 93-146).